A 122-amino-acid chain; its full sequence is Basic phospholipase A2 Cdr-12 (122 aa).

7 disulfides stabilise this stretch: C26–C115, C28–C44, C43–C95, C49–C122, C50–C88, C57–C81, and C75–C86. Y27, G29, and G31 together coordinate Ca(2+). Residue H47 is part of the active site. D48 is a Ca(2+) binding site. D89 is an active-site residue.

It depends on Ca(2+) as a cofactor. In terms of tissue distribution, expressed by the venom gland.

The protein resides in the secreted. It carries out the reaction a 1,2-diacyl-sn-glycero-3-phosphocholine + H2O = a 1-acyl-sn-glycero-3-phosphocholine + a fatty acid + H(+). Snake venom phospholipase A2 (PLA2) that induces myonecrosis and edema upon intramuscular injections in mice. In vitro, causes a potent blockade of neuromuscular transmission in young chicken biventer cervicis preparation and produces cytotoxicity in murine C2C12 skeletal muscle myotubes and lack cytolytic activity upon myoblasts in vitro. PLA2 catalyzes the calcium-dependent hydrolysis of the 2-acyl groups in 3-sn-phosphoglycerides. The protein is Basic phospholipase A2 Cdr-12 of Crotalus durissus ruruima (South American rattlesnake).